The sequence spans 1129 residues: Protein DWARF 53-LIKE (1129 aa).

The Clp R domain occupies 8-180 (ARQCLSPAAV…KLAILRPAPP (173 aa)). Repeat regions lie at residues 12–85 (LSPA…LDRL) and 102–180 (VSNS…PAPP). Residues 519 to 573 (RYIGVPADKERSANPSKGSESIGVQKDVIKPCAVSAVHSSSTARPISSPSVTNKR) are disordered. Positions 557 to 568 (SSSTARPISSPS) are enriched in low complexity. Residues 577 to 581 (LVLNL) carry the EAR 1 motif. The tract at residues 587–654 (KSDENLQERG…KRVEDSERSV (68 aa)) is disordered. A compositionally biased stretch (polar residues) spans 596-608 (GMQSQHGTLSNAD). Residues 645-654 (KRVEDSERSV) are compositionally biased toward basic and acidic residues. 2 short sequence motifs (EAR) span residues 798 to 802 (LDLNL) and 975 to 980 (FDLNLP). Positions 975–1001 (FDLNLPVDEDEPFDADDDSSSHENSYG) are disordered. Residues 981–992 (VDEDEPFDADDD) show a composition bias toward acidic residues.

This sequence belongs to the ClpA/ClpB family. Polyubiquitinated. Strigolactone, but not karrikin, triggers rapid SCF(D3)-dependent degradation via the proteasome.

In terms of biological role, repressor of strigolactones (SL) signaling. Subjected to a negative feedback control of SL signaling. The protein is Protein DWARF 53-LIKE of Oryza sativa subsp. japonica (Rice).